Here is a 102-residue protein sequence, read N- to C-terminus: MVGNMNIRDKIKSIKNWINFIKPIITIVGIVISAVAFTISILWGMLFLILFLILITFSKTIRKILSKKERSYQGLILSIIGSIIIISIIVYSHCYIEFKLLI.

The next 3 membrane-spanning stretches (helical) occupy residues Ile14–Ala34, Val35–Ile55, and Ile76–Ile96.

It localises to the cell membrane. This is an uncharacterized protein from Methanocaldococcus jannaschii (strain ATCC 43067 / DSM 2661 / JAL-1 / JCM 10045 / NBRC 100440) (Methanococcus jannaschii).